Here is an 83-residue protein sequence, read N- to C-terminus: Cytochrome b559 subunit alpha (83 aa).

A helical transmembrane segment spans residues 22-36 (VIHAVTLPAIFLAGF). His24 contacts heme.

This sequence belongs to the PsbE/PsbF family. In terms of assembly, heterodimer of an alpha subunit and a beta subunit. PSII is composed of 1 copy each of membrane proteins PsbA, PsbB, PsbC, PsbD, PsbE, PsbF, PsbH, PsbI, PsbJ, PsbK, PsbL, PsbM, PsbT, PsbX, PsbY, PsbZ, Psb30/Ycf12, peripheral proteins PsbO, CyanoQ (PsbQ), PsbU, PsbV and a large number of cofactors. It forms dimeric complexes. Heme b is required as a cofactor.

The protein resides in the cellular thylakoid membrane. This b-type cytochrome is tightly associated with the reaction center of photosystem II (PSII). PSII is a light-driven water:plastoquinone oxidoreductase that uses light energy to abstract electrons from H(2)O, generating O(2) and a proton gradient subsequently used for ATP formation. It consists of a core antenna complex that captures photons, and an electron transfer chain that converts photonic excitation into a charge separation. In Synechococcus sp. (strain RCC307), this protein is Cytochrome b559 subunit alpha.